Reading from the N-terminus, the 530-residue chain is uncharacterized protein (530 aa).

The tract at residues 362–408 (NLTPKLNKTNEDIKSDSTSQPQGFPEGNRRVMENPETKVSKTDDEEM) is disordered. Residues 388 to 403 (GNRRVMENPETKVSKT) are compositionally biased toward basic and acidic residues.

It belongs to the IIV-6 030L family.

This is an uncharacterized protein from Invertebrate iridescent virus 6 (IIV-6).